Here is a 122-residue protein sequence, read N- to C-terminus: Large ribosomal subunit protein uL14 (122 aa).

This sequence belongs to the universal ribosomal protein uL14 family. Part of the 50S ribosomal subunit. Forms a cluster with proteins L3 and L19. In the 70S ribosome, L14 and L19 interact and together make contacts with the 16S rRNA in bridges B5 and B8.

Functionally, binds to 23S rRNA. Forms part of two intersubunit bridges in the 70S ribosome. The chain is Large ribosomal subunit protein uL14 from Thermobifida fusca (strain YX).